A 210-amino-acid chain; its full sequence is Pyrrolidone-carboxylate peptidase (210 aa).

Residues Glu80, Cys143, and His162 contribute to the active site.

The protein belongs to the peptidase C15 family. In terms of assembly, homotetramer.

It is found in the cytoplasm. It carries out the reaction Release of an N-terminal pyroglutamyl group from a polypeptide, the second amino acid generally not being Pro.. Removes 5-oxoproline from various penultimate amino acid residues except L-proline. In Chromobacterium violaceum (strain ATCC 12472 / DSM 30191 / JCM 1249 / CCUG 213 / NBRC 12614 / NCIMB 9131 / NCTC 9757 / MK), this protein is Pyrrolidone-carboxylate peptidase.